The primary structure comprises 1174 residues: Lysylphosphatidylglycerol biosynthesis bifunctional protein LysX (1174 aa).

The phosphatidylglycerol lysyltransferase stretch occupies residues 1–665 (MGVGLHLTVP…LLHHDGSAPD (665 aa)). The tract at residues 9-36 (VPGLRRDGRGVQSNSHDTSSKTTADISR) is disordered. Polar residues predominate over residues 19–33 (VQSNSHDTSSKTTAD). A run of 7 helical transmembrane segments spans residues 82–102 (VPAAAGWTVGVIATLSLLASV), 124–144 (FPDTNFAWSFVLALLAAALTA), 148–168 (IAWLVLLANMVLAAVVNAAEI), 179–199 (FGENLGFAVHVVAIVVLVLGY), 216–236 (AVWLAGAVVGIVASWGLVELF), 274–294 (AIFGLFGAFALIGAAIVLFLS), and 614–634 (VIPRVGVASVIAEGFLVLPFS). Residues 666–1174 (VSGLRQVGLT…TLPFPLAKPH (509 aa)) form a lysine--tRNA ligase region. Positions 728–806 (VSVSGRIMRI…SLIVSGWRLI (79 aa)) form a DNA-binding region, OB. Residues Asp1086 and Glu1093 each contribute to the Mg(2+) site.

This sequence in the N-terminal section; belongs to the LPG synthetase family. The protein in the C-terminal section; belongs to the class-II aminoacyl-tRNA synthetase family. It depends on Mg(2+) as a cofactor.

Its subcellular location is the cell membrane. The catalysed reaction is tRNA(Lys) + L-lysine + ATP = L-lysyl-tRNA(Lys) + AMP + diphosphate. The enzyme catalyses L-lysyl-tRNA(Lys) + a 1,2-diacyl-sn-glycero-3-phospho-(1'-sn-glycerol) = a 1,2-diacyl-sn-glycero-3-phospho-1'-(3'-O-L-lysyl)-sn-glycerol + tRNA(Lys). Catalyzes the production of L-lysyl-tRNA(Lys)transfer and the transfer of a lysyl group from L-lysyl-tRNA(Lys) to membrane-bound phosphatidylglycerol (PG), which produces lysylphosphatidylglycerol (LPG), one of the components of the bacterial membrane with a positive net charge. LPG synthesis contributes to the resistance to cationic antimicrobial peptides (CAMPs) and likely protects M.tuberculosis against the CAMPs produced by competiting microorganisms (bacteriocins). In fact, the modification of anionic phosphatidylglycerol with positively charged L-lysine results in repulsion of the peptides. The protein is Lysylphosphatidylglycerol biosynthesis bifunctional protein LysX (lysX) of Mycobacterium tuberculosis (strain KZN 1435 / MDR).